The following is a 139-amino-acid chain: Interleukin-5 (139 aa).

An N-terminal signal peptide occupies residues 1-19 (MMKILVCLPLLTLYAGCVY). N-linked (GlcNAc...) asparagine glycosylation is found at Asn-48, Asn-77, and Asn-91.

This sequence belongs to the IL-5 family. As to quaternary structure, homodimer; disulfide-linked. Interacts with IL5RA. Interacts with CSF2RB.

The protein resides in the secreted. Homodimeric cytokine expressed predominantly by T-lymphocytes and NK cells that plays an important role in the survival, differentiation, and chemotaxis of eosinophils. Also acts on activated and resting B-cells to induce immunoglobulin production, growth, and differentiation. Mechanistically, exerts its biological effects through a receptor composed of IL5RA subunit and the cytokine receptor common subunit beta/CSF2RB. Binding to the receptor leads to activation of various kinases including LYN, SYK and JAK2 and thereby propagates signals through the RAS-MAPK and JAK-STAT5 pathways respectively. The polypeptide is Interleukin-5 (IL5) (Notamacropus eugenii (Tammar wallaby)).